The following is a 309-amino-acid chain: L-aminoadipate-semialdehyde dehydrogenase-phosphopantetheinyl transferase (309 aa).

CoA-binding positions include arginine 47, 86–91 (RTSKGK), and 108–111 (NISH). Aspartate 129 and glutamate 181 together coordinate Mg(2+). A CoA-binding site is contributed by 181–185 (ESFIK).

Belongs to the P-Pant transferase superfamily. AcpS family. In terms of assembly, monomer. Mg(2+) serves as cofactor.

The protein resides in the cytoplasm. Its subcellular location is the cytosol. The catalysed reaction is apo-[ACP] + CoA = holo-[ACP] + adenosine 3',5'-bisphosphate + H(+). It carries out the reaction apo-[ACP] + acetyl-CoA = acetyl-[ACP] + adenosine 3',5'-bisphosphate + H(+). Functionally, catalyzes the post-translational modification of target proteins by phosphopantetheine. Can transfer the 4'-phosphopantetheine moiety from coenzyme A, regardless of whether the CoA is presented in the free thiol form or as an acetyl thioester, to a serine residue of a broad range of acceptors including the acyl carrier domain of FASN. In Mus musculus (Mouse), this protein is L-aminoadipate-semialdehyde dehydrogenase-phosphopantetheinyl transferase (Aasdhppt).